The primary structure comprises 111 residues: Probable monothiol glutaredoxin 2 (111 aa).

One can recognise a Glutaredoxin domain in the interval 7 to 109 (LKFIQNAIKK…KMLKDETKLI (103 aa)). Lysine 24 contributes to the glutathione binding site. Position 32 (cysteine 32) interacts with [2Fe-2S] cluster. Glutathione contacts are provided by residues arginine 61, phenylalanine 73, and 86–87 (CD).

The protein belongs to the glutaredoxin family. Monothiol subfamily.

The polypeptide is Probable monothiol glutaredoxin 2 (grxC2) (Rickettsia typhi (strain ATCC VR-144 / Wilmington)).